The primary structure comprises 299 residues: Zinc finger protein-like 1 homolog (299 aa).

The B box-type; degenerate zinc finger occupies 1–43 (MGLCKCPKRLVTNQFCFEHRVNVCEHCMVQSHPKCIVQSYLQW). An RING-type; atypical zinc finger spans residues 53–101 (CTLCGTTLEQGDCVRLVCYHVFHWDCLNARQAALPANTAPRGHQCPACS). Positions 200-231 (AGDYASSRRPLLPRQSPIGGTDRDDNKYQRRT) are disordered. Phosphoserine is present on serine 215. The chain crosses the membrane as a helical span at residues 256-276 (WFLVTAGILAFVLFVYLMAWL).

This sequence belongs to the ZFPL1 family.

The protein localises to the membrane. This Drosophila melanogaster (Fruit fly) protein is Zinc finger protein-like 1 homolog.